The following is a 310-amino-acid chain: MSGRTLLLSPPSLSSQPERLNGILQSYDRKTTDLQMLDRLILGVVNLPDAAYSRIIILAGEEDSISESSKLTTRETFSHIARSLQKGGYICSQHEQQGQAFDHNEAVLVGLIPTDNGKFVKPDIEDMRAVPLRLGRKKHDKTISSNLAEPVRNHQASPTVAQDQAEDGFRYSSGRNIVTASAHETSDNEIIDEEDLLDGSELAAPIIQPPECRPKAGRRRRACKDCTCGLAQKLEEEDAMRRHAADKQLGAMKLSHGDLAEVDFTVQGKVGSCGNCSLGDAFRCEGCPFIGLPAFQPGEEIRLLNDDIQL.

Residues 1 to 130 form an N-terminal SAM-like domain region; it reads MSGRTLLLSP…KPDIEDMRAV (130 aa). Residues 131–203 form a linker region; sequence PLRLGRKKHD…EDLLDGSELA (73 aa). Positions 212, 223, 226, and 228 each coordinate [2Fe-2S] cluster. A fe-S binding site A region spans residues 212–228; the sequence is CRPKAGRRRRACKDCTC. [4Fe-4S] cluster contacts are provided by cysteine 273, cysteine 276, cysteine 284, and cysteine 287. Short sequence motifs (cx2C motif) lie at residues 273-276 and 284-287; these read CGNC and CEGC. The interval 273 to 287 is fe-S binding site B; sequence CGNCSLGDAFRCEGC.

This sequence belongs to the anamorsin family. In terms of assembly, monomer. Interacts with tah18. Interacts with mia40. The cofactor is [2Fe-2S] cluster. [4Fe-4S] cluster is required as a cofactor.

It is found in the cytoplasm. Its subcellular location is the mitochondrion intermembrane space. Its function is as follows. Component of the cytosolic iron-sulfur (Fe-S) protein assembly (CIA) machinery required for the maturation of extramitochondrial Fe-S proteins. Part of an electron transfer chain functioning in an early step of cytosolic Fe-S biogenesis, facilitating the de novo assembly of a [4Fe-4S] cluster on the scaffold complex cfd1-nbp35. Electrons are transferred to dre2 from NADPH via the FAD- and FMN-containing protein tah18. Tah18-dre2 are also required for the assembly of the diferric tyrosyl radical cofactor of ribonucleotide reductase (RNR), probably by providing electrons for reduction during radical cofactor maturation in the catalytic small subunit rnr2. This Aspergillus clavatus (strain ATCC 1007 / CBS 513.65 / DSM 816 / NCTC 3887 / NRRL 1 / QM 1276 / 107) protein is Fe-S cluster assembly protein dre2.